We begin with the raw amino-acid sequence, 750 residues long: Glutathione biosynthesis bifunctional protein GshAB (750 aa).

Residues 1-333 (MIIDRLLQRS…EANRLNDLIA (333 aa)) are glutamate--cysteine ligase. A disordered region spans residues 32 to 51 (QPTQRVAQTPHPKTLGSRNY). An ATP-grasp domain is found at 489-747 (KKILDEKHFP…ITPRILAKLF (259 aa)). ATP is bound at residue 516-574 (SQIQDKPIVVKPKSTNFGLGISIFKTSANLASYEKAIDIAFTEDSAILVEEYIEGTEYR). Mg(2+)-binding residues include D696, E717, and N719. The Mn(2+) site is built by D696, E717, and N719.

This sequence in the N-terminal section; belongs to the glutamate--cysteine ligase type 1 family. Type 2 subfamily. In terms of assembly, monomer. Mg(2+) is required as a cofactor. Mn(2+) serves as cofactor.

The enzyme catalyses L-cysteine + L-glutamate + ATP = gamma-L-glutamyl-L-cysteine + ADP + phosphate + H(+). It catalyses the reaction gamma-L-glutamyl-L-cysteine + glycine + ATP = glutathione + ADP + phosphate + H(+). It functions in the pathway sulfur metabolism; glutathione biosynthesis; glutathione from L-cysteine and L-glutamate: step 1/2. Its pathway is sulfur metabolism; glutathione biosynthesis; glutathione from L-cysteine and L-glutamate: step 2/2. Its function is as follows. Synthesizes glutathione from L-glutamate and L-cysteine via gamma-L-glutamyl-L-cysteine. The polypeptide is Glutathione biosynthesis bifunctional protein GshAB (Streptococcus agalactiae serotype III (strain NEM316)).